We begin with the raw amino-acid sequence, 687 residues long: MELFTVNRYTEDLKEQKDGAQGTNNEDEILQKLLKKAAKRKRKHEAIEVVETPILEKETSDVKESESKEEQVEEPEKPLEVVQEEDVPSNEFQVLGGDDSAAKKKKVQMQLPNWLAHPTIIEGGSLQPEEEVPASEAIDQLDYLEKYTCQALKQMKIKRLFPVQKQVIPWILEAHAKPPPFRPRDICVSAPTGSGKTLAFAIPIVQLLSQRVDCKVRALVVLPVAELALQVYRVISELCSKTELEVCLLSKQHKLEDEQEKLVEQYKGKYYSKADIVVTTPGRLVDHLHATKGFCLKSLKFLVIDEADRIMDAVFQNWLYHLDSHVKETTDQLLAGTQAPLCYAELQASFGKQPHKLLFSATLSQDPEKLQDLRLFQPRLFATVLTMPVLKDATEEGADTEALTDPGQFVGRYTTPAELTEQYCVTELRLKPLTVFALVEKYKWKRFLCFTNSSDQATRLTFVLKVLFQKYSTKVSELSGNLSAKVRNERLRDFAAGKINGLICSDALARGIDVADVDVVLSYETPRHITTYIHRVGRTARAGRKGTAVTVLTEQDMTLFKKILSDANKGLGEEIHVSPDIEIQHAVEYKEALAGLRSEKVKNKNQKMAEKNRVATKALIHKKQEETATVRPLTLMEKLQIKANEIVQSSKKSSETKNSKTKADKTKYQPKETKKQIIAKQLKAIEN.

Disordered regions lie at residues 1 to 26 (MELF…TNNE) and 52 to 87 (TPIL…EEDV). 2 stretches are compositionally biased toward basic and acidic residues: residues 9 to 18 (YTEDLKEQKD) and 54 to 79 (ILEK…EKPL). Residues 160-168 (LFPVQKQVI) carry the Q motif motif. One can recognise a Helicase ATP-binding domain in the interval 177 to 381 (KPPPFRPRDI…DLRLFQPRLF (205 aa)). 190–197 (APTGSGKT) contributes to the ATP binding site. Positions 305–308 (DEAD) match the DEAD box motif. Residues 434 to 583 (TVFALVEKYK…EIHVSPDIEI (150 aa)) form the Helicase C-terminal domain. Residues 646 to 675 (IVQSSKKSSETKNSKTKADKTKYQPKETKK) form a disordered region. Residues 652–675 (KSSETKNSKTKADKTKYQPKETKK) show a composition bias toward basic and acidic residues.

Belongs to the DEAD box helicase family. DDX51/DBP6 subfamily. In terms of tissue distribution, expressed in the germline tissue of the ovary.

The protein localises to the nucleus. Its subcellular location is the nucleolus. The enzyme catalyses ATP + H2O = ADP + phosphate + H(+). ATP-binding RNA helicase involved in the biogenesis of 60S ribosomal subunits. In Drosophila melanogaster (Fruit fly), this protein is Probable ATP-dependent RNA helicase Dbp73D (Dbp73D).